A 304-amino-acid polypeptide reads, in one-letter code: Probable aspartoacylase (304 aa).

H13 and E16 together coordinate Zn(2+). Substrate is bound by residues R55 and 62 to 63; that span reads NR. H104 serves as a coordination point for Zn(2+). Positions 162 and 272 each coordinate substrate.

This sequence belongs to the AspA/AstE family. Aspartoacylase subfamily. Zn(2+) is required as a cofactor.

It carries out the reaction an N-acyl-L-aspartate + H2O = a carboxylate + L-aspartate. The chain is Probable aspartoacylase from Synechococcus sp. (strain CC9605).